The following is a 942-amino-acid chain: MORC family CW-type zinc finger protein 3 (942 aa).

Glycyl lysine isopeptide (Lys-Gly) (interchain with G-Cter in SUMO2) cross-links involve residues Lys191, Lys205, Lys280, and Lys293. The tract at residues 326–353 (AYEKVGCQLKANNMGVGVVGIIECNFLK) is nuclear matrix binding. Residues 404–454 (KRPDQTWVQCDACLKWRKLPDGIDQLPEKWYCSNNPDPQFRNCEVPEEPED) form a CW-type zinc finger. Zn(2+) is bound by residues Cys413, Cys416, Cys435, and Cys446. The RNA binding stretch occupies residues 503-594 (SFSPVKESVP…ENSTPKPAVD (92 aa)). A phosphoserine mark is found at Ser517 and Ser543. A Glycyl lysine isopeptide (Lys-Gly) (interchain with G-Cter in SUMO2) cross-link involves residue Lys558. Ser563 carries the phosphoserine modification. Residue Lys604 forms a Glycyl lysine isopeptide (Lys-Gly) (interchain with G-Cter in SUMO1); alternate linkage. Lys604 participates in a covalent cross-link: Glycyl lysine isopeptide (Lys-Gly) (interchain with G-Cter in SUMO2); alternate. The tract at residues 623-654 (PKPCVQASSTSTSTSRSDPGITVSTQTDAPGL) is disordered. Low complexity predominate over residues 630–639 (SSTSTSTSRS). Residues Lys657, Lys658, and Lys743 each participate in a glycyl lysine isopeptide (Lys-Gly) (interchain with G-Cter in SUMO1); alternate cross-link. Residues Lys657, Lys658, and Lys743 each participate in a glycyl lysine isopeptide (Lys-Gly) (interchain with G-Cter in SUMO2); alternate cross-link. Residues 696 to 874 (SHQLQELRSE…KSTGQQAAAD (179 aa)) adopt a coiled-coil conformation. A Phosphoserine modification is found at Ser768. A Glycyl lysine isopeptide (Lys-Gly) (interchain with G-Cter in SUMO1); alternate cross-link involves residue Lys797. Lys797 participates in a covalent cross-link: Glycyl lysine isopeptide (Lys-Gly) (interchain with G-Cter in SUMO2); alternate.

As to quaternary structure, homodimer. The sumoylated form interacts with PML (via SUMO-interacting motif). Interacts with TP53. Sumoylation is involved in interaction with PML and localization to PML nuclear bodies.

Its subcellular location is the nucleus. The protein resides in the nucleoplasm. The protein localises to the nucleus matrix. It localises to the PML body. It is found in the chromosome. Its activity is regulated as follows. Dimerization of the ATPase domain is strictly required for the catalytic activity and binding to double-stranded DNA. Disrupting the interface between ATPase and the CW domains releases autoinhibition since the CW domain sterically impedes binding of the ATPase domain to DNA. Functionally, nuclear matrix protein which forms MORC3-NBs (nuclear bodies) via an ATP-dependent mechanism and plays a role in innate immunity by restricting different viruses through modulation of the IFN response. Mechanistically, possesses a primary antiviral function through a MORC3-regulated element that activates IFNB1, and this function is guarded by a secondary IFN-repressing function. Sumoylated MORC3-NBs associates with PML-NBs and recruits TP53 and SP100, thus regulating TP53 activity. Binds RNA in vitro. Histone methylation reader which binds to non-methylated (H3K4me0), monomethylated (H3K4me1), dimethylated (H3K4me2) and trimethylated (H3K4me3) 'Lys-4' on histone H3. The order of binding preference is H3K4me3 &gt; H3K4me2 &gt; H3K4me1 &gt; H3K4me0. The chain is MORC family CW-type zinc finger protein 3 from Mus musculus (Mouse).